A 251-amino-acid chain; its full sequence is Triosephosphate isomerase (251 aa).

9 to 11 provides a ligand contact to substrate; the sequence is NWK. The active-site Electrophile is His95. Glu167 (proton acceptor) is an active-site residue. Substrate contacts are provided by residues Gly173, Ser212, and 233–234; that span reads GG.

The protein belongs to the triosephosphate isomerase family. In terms of assembly, homodimer.

It localises to the cytoplasm. It catalyses the reaction D-glyceraldehyde 3-phosphate = dihydroxyacetone phosphate. The protein operates within carbohydrate biosynthesis; gluconeogenesis. Its pathway is carbohydrate degradation; glycolysis; D-glyceraldehyde 3-phosphate from glycerone phosphate: step 1/1. Its function is as follows. Involved in the gluconeogenesis. Catalyzes stereospecifically the conversion of dihydroxyacetone phosphate (DHAP) to D-glyceraldehyde-3-phosphate (G3P). This is Triosephosphate isomerase from Pseudomonas savastanoi pv. phaseolicola (strain 1448A / Race 6) (Pseudomonas syringae pv. phaseolicola (strain 1448A / Race 6)).